We begin with the raw amino-acid sequence, 40 residues long: Photosystem II reaction center protein J (40 aa).

Residues 8 to 28 (IPLWIIGTVAGILVIGLVGVF) traverse the membrane as a helical segment.

The protein belongs to the PsbJ family. PSII is composed of 1 copy each of membrane proteins PsbA, PsbB, PsbC, PsbD, PsbE, PsbF, PsbH, PsbI, PsbJ, PsbK, PsbL, PsbM, PsbT, PsbX, PsbY, PsbZ, Psb30/Ycf12, at least 3 peripheral proteins of the oxygen-evolving complex and a large number of cofactors. It forms dimeric complexes.

The protein localises to the plastid. Its subcellular location is the chloroplast thylakoid membrane. In terms of biological role, one of the components of the core complex of photosystem II (PSII). PSII is a light-driven water:plastoquinone oxidoreductase that uses light energy to abstract electrons from H(2)O, generating O(2) and a proton gradient subsequently used for ATP formation. It consists of a core antenna complex that captures photons, and an electron transfer chain that converts photonic excitation into a charge separation. This Helianthus annuus (Common sunflower) protein is Photosystem II reaction center protein J.